We begin with the raw amino-acid sequence, 334 residues long: Putative lysine N-acyltransferase C17G9.06c (334 aa).

H248 contributes to the substrate binding site. E286 serves as the catalytic Proton acceptor.

Belongs to the lysine N-acyltransferase mbtK family.

Its subcellular location is the cytoplasm. It localises to the nucleus. This Schizosaccharomyces pombe (strain 972 / ATCC 24843) (Fission yeast) protein is Putative lysine N-acyltransferase C17G9.06c.